We begin with the raw amino-acid sequence, 359 residues long: 4-galactosyl-N-acetylglucosaminide 3-alpha-L-fucosyltransferase FUT6 (359 aa).

The Cytoplasmic portion of the chain corresponds to 1 to 14; sequence MDPLGPAKTQWSWR. Residues 15-34 traverse the membrane as a helical; Signal-anchor for type II membrane protein segment; it reads CCLTALLFQLLVAVCFFSYL. At 35 to 359 the chain is on the lumenal side; sequence RVSRDDPTVY…QTRSIAAWFT (325 aa). The determines site-specific fucosylation stretch occupies residues 73 to 112; the sequence is KPIALPRCSEMVPGTADCNITADRKVYPQADAVIVHHREV. Asparagine 91, asparagine 153, and asparagine 184 each carry an N-linked (GlcNAc...) asparagine glycan.

It belongs to the glycosyltransferase 10 family. Homodimer and monomer. Monomer (secreted form). N-glycosylated. Post-translationally, proteolytic cleavage releases a secreted glycoform of 43 kDa.

It localises to the golgi apparatus. Its subcellular location is the golgi stack membrane. The protein resides in the secreted. The enzyme catalyses a beta-D-galactosyl-(1-&gt;4)-N-acetyl-beta-D-glucosaminyl derivative + GDP-beta-L-fucose = a beta-D-galactosyl-(1-&gt;4)-[alpha-L-fucosyl-(1-&gt;3)]-N-acetyl-beta-D-glucosaminyl derivative + GDP + H(+). It catalyses the reaction an N-acetyl-alpha-neuraminyl-(2-&gt;3)-beta-D-galactosyl-(1-&gt;4)-N-acetyl-beta-D-glucosaminyl derivative + GDP-beta-L-fucose = an alpha-Neu5Ac-(2-&gt;3)-beta-D-Gal-(1-&gt;4)-[alpha-L-Fuc-(1-&gt;3)]-beta-D-GlcNAc derivative + GDP + H(+). The catalysed reaction is an alpha-Neu5Ac-(2-&gt;3)-beta-D-Gal-(1-&gt;4)-beta-D-GlcNAc-(1-&gt;3)-beta-D-Gal-(1-&gt;4)-[alpha-L-Fuc-(1-&gt;3)]-beta-D-GlcNAc derivative + GDP-beta-L-fucose = an alpha-Neu5Ac-(2-&gt;3)-beta-D-Gal-(1-&gt;4)-[alpha-L-Fuc-(1-&gt;3)]-beta-D-GlcNAc-(1-&gt;3)-beta-D-Gal-(1-&gt;4)-[alpha-L-Fuc-(1-&gt;3)]-beta-D-GlcNAc derivative + GDP + H(+). It carries out the reaction a neolactoside nLc6Cer + GDP-beta-L-fucose = beta-D-Gal-(1-&gt;4)-[alpha-L-Fuc-(1-&gt;3)]-beta-D-GlcNAc-(1-&gt;3)-beta-D-Gal-(1-&gt;4)-beta-D-GlcNAc-(1-&gt;3)-beta-D-Gal-(1-&gt;4)-beta-D-Glc-(1&lt;-&gt;1')-Cer + GDP + H(+). The enzyme catalyses a neolactoside nLc6Cer + GDP-beta-L-fucose = beta-D-galactosyl-(1-&gt;4)-N-acetyl-beta-D-glucosaminyl-(1-&gt;3)-beta-D-galactosyl-(1-&gt;4)-[alpha-L-fucosyl-(1-&gt;3)]-N-acetyl-beta-D-glucosaminyl-(1-&gt;3)-beta-D-galactosyl-(1-&gt;4)-beta-D-glucosyl-(1&lt;-&gt;1')-ceramide + GDP + H(+). It catalyses the reaction a neolactoside VI(3)-alpha-NeuNAc-nLc6Cer + GDP-beta-L-fucose = a neolactoside VI(3)-alpha-NeuAc,V(3)-alphaFuc-nLc6Cer + GDP + H(+). The catalysed reaction is beta-D-galactosyl-(1-&gt;4)-N-acetyl-D-glucosamine + GDP-beta-L-fucose = beta-D-galactosyl-(1-&gt;4)-[alpha-L-fucosyl-(1-&gt;3)]-N-acetyl-D-glucosamine + GDP + H(+). It carries out the reaction N-acetyl-alpha-neuraminosyl-(2-&gt;3)-beta-D-galactosyl-(1-&gt;4)-N-acetyl-beta-D-glucosamine + GDP-beta-L-fucose = N-acetyl-alpha-neuraminosyl-(2-&gt;3)-beta-D-galactosyl-(1-&gt;4)-[alpha-L-fucosyl-(1-&gt;3)]-N-acetyl-beta-D-glucosamine + GDP + H(+). The enzyme catalyses lactose + GDP-beta-L-fucose = beta-D-galactosyl-(1-&gt;4)-[alpha-L-fucosyl-(1-&gt;3)]-D-glucose + GDP + H(+). It catalyses the reaction alpha-L-Fuc-(1-&gt;2)-beta-D-Gal-(1-&gt;4)-D-Glc + GDP-beta-L-fucose = alpha-L-Fuc-(1-&gt;2)-beta-D-Gal-(1-&gt;4)-[alpha-L-Fuc-(1-&gt;3)]-D-Glc + GDP + H(+). The catalysed reaction is a beta-D-galactosyl-(1-&gt;4)-N-acetyl-beta-D-6-sulfooxy-glucosaminyl derivative + GDP-beta-L-fucose = a beta-D-galactosyl-(1-&gt;4)-[alpha-L-fucosyl-(1-&gt;3)]-N-acetyl-beta-D-6-sulfooxy-glucosaminyl derivative + GDP + H(+). The protein operates within protein modification; protein glycosylation. Catalyzes the transfer of L-fucose, from a guanosine diphosphate-beta-L-fucose, to the N-acetyl glucosamine (GlcNAc) of a distal alpha2,3 sialylated lactosamine unit of a glycoprotein- or glycolipid-linked sialopolylactosamines chain or of a distal or internal lactosamine unit of a neutral glycoprotein- or glycolipid-linked polylactosamines chain through an alpha-1,3 glycosidic linkage and participates in surface expression of the sialyl Lewis X (sLe(x)), Lewis X (Le(x)) and non sialylated VIM2 determinants. Moreover transfers fucose to H-type 2 (Fucalpha1-2Galbeta1-4GlcNAc) chain acceptor substrates and participates in difucosylated sialyl Lewis x determinants. Also fucosylates a polylactosamine substrate having a 6 sulfate modification at the GlcNAc moiety and gives rise to sialyl and non-sialyl 6-sulfo lewis X. Does not have activity towards type 1 ((Galbeta1-3GlcNAc)) and H-type 1 chain (Fucalpha1-2Galbeta1-3GlcNAc) acceptors substrates. The polypeptide is 4-galactosyl-N-acetylglucosaminide 3-alpha-L-fucosyltransferase FUT6 (Pongo pygmaeus (Bornean orangutan)).